The primary structure comprises 310 residues: ADP-L-glycero-D-manno-heptose-6-epimerase (310 aa).

NADP(+)-binding positions include 10 to 11, 31 to 32, lysine 38, lysine 53, 75 to 79, and asparagine 92; these read FI, DN, and EGACS. Tyrosine 140 (proton acceptor) is an active-site residue. Residue lysine 144 coordinates NADP(+). Residue asparagine 169 coordinates substrate. Residues valine 170 and lysine 178 each coordinate NADP(+). The Proton acceptor role is filled by lysine 178. Substrate is bound by residues serine 180, histidine 187, 201-204, arginine 209, and tyrosine 272; that span reads FEGS.

It belongs to the NAD(P)-dependent epimerase/dehydratase family. HldD subfamily. As to quaternary structure, homopentamer. NADP(+) serves as cofactor.

The catalysed reaction is ADP-D-glycero-beta-D-manno-heptose = ADP-L-glycero-beta-D-manno-heptose. It functions in the pathway nucleotide-sugar biosynthesis; ADP-L-glycero-beta-D-manno-heptose biosynthesis; ADP-L-glycero-beta-D-manno-heptose from D-glycero-beta-D-manno-heptose 7-phosphate: step 4/4. Its pathway is bacterial outer membrane biogenesis; LPS core biosynthesis. Functionally, catalyzes the interconversion between ADP-D-glycero-beta-D-manno-heptose and ADP-L-glycero-beta-D-manno-heptose via an epimerization at carbon 6 of the heptose. The polypeptide is ADP-L-glycero-D-manno-heptose-6-epimerase (Klebsiella pneumoniae).